A 207-amino-acid chain; its full sequence is Small ribosomal subunit protein uS4 (207 aa).

An S4 RNA-binding domain is found at 97-165; sequence SRLDNLVFRM…VKLALESKAV (69 aa).

It belongs to the universal ribosomal protein uS4 family. As to quaternary structure, part of the 30S ribosomal subunit. Contacts protein S5. The interaction surface between S4 and S5 is involved in control of translational fidelity.

Its function is as follows. One of the primary rRNA binding proteins, it binds directly to 16S rRNA where it nucleates assembly of the body of the 30S subunit. In terms of biological role, with S5 and S12 plays an important role in translational accuracy. The polypeptide is Small ribosomal subunit protein uS4 (Mycoplasmoides gallisepticum (strain R(low / passage 15 / clone 2)) (Mycoplasma gallisepticum)).